Reading from the N-terminus, the 28-residue chain is Cytochrome c oxidase subunit 5B, mitochondrial (28 aa).

This sequence belongs to the cytochrome c oxidase subunit 5B family. In terms of assembly, component of the cytochrome c oxidase (complex IV, CIV), a multisubunit enzyme composed of a catalytic core of 3 subunits and several supernumerary subunits. The complex exists as a monomer or a dimer and forms supercomplexes (SCs) in the inner mitochondrial membrane with ubiquinol-cytochrome c oxidoreductase (cytochrome b-c1 complex, complex III, CIII).

It localises to the mitochondrion inner membrane. It participates in energy metabolism; oxidative phosphorylation. Its function is as follows. Component of the cytochrome c oxidase, the last enzyme in the mitochondrial electron transport chain which drives oxidative phosphorylation. The respiratory chain contains 3 multisubunit complexes succinate dehydrogenase (complex II, CII), ubiquinol-cytochrome c oxidoreductase (cytochrome b-c1 complex, complex III, CIII) and cytochrome c oxidase (complex IV, CIV), that cooperate to transfer electrons derived from NADH and succinate to molecular oxygen, creating an electrochemical gradient over the inner membrane that drives transmembrane transport and the ATP synthase. Cytochrome c oxidase is the component of the respiratory chain that catalyzes the reduction of oxygen to water. Electrons originating from reduced cytochrome c in the intermembrane space (IMS) are transferred via the dinuclear copper A center (CU(A)) of subunit 2 and heme A of subunit 1 to the active site in subunit 1, a binuclear center (BNC) formed by heme A3 and copper B (CU(B)). The BNC reduces molecular oxygen to 2 water molecules using 4 electrons from cytochrome c in the IMS and 4 protons from the mitochondrial matrix. The sequence is that of Cytochrome c oxidase subunit 5B, mitochondrial from Solanum tuberosum (Potato).